Here is a 313-residue protein sequence, read N- to C-terminus: Porphobilinogen deaminase (313 aa).

Cysteine 242 is modified (S-(dipyrrolylmethanemethyl)cysteine).

Belongs to the HMBS family. In terms of assembly, monomer. Dipyrromethane is required as a cofactor.

The enzyme catalyses 4 porphobilinogen + H2O = hydroxymethylbilane + 4 NH4(+). The protein operates within porphyrin-containing compound metabolism; protoporphyrin-IX biosynthesis; coproporphyrinogen-III from 5-aminolevulinate: step 2/4. Its function is as follows. Tetrapolymerization of the monopyrrole PBG into the hydroxymethylbilane pre-uroporphyrinogen in several discrete steps. In Shigella flexneri, this protein is Porphobilinogen deaminase.